We begin with the raw amino-acid sequence, 222 residues long: Ubiquitin-conjugating enzyme E2 S (222 aa).

Met-1 is subject to N-acetylmethionine. The UBC core domain maps to 11–157; sequence HIIRLVYKEV…ARLLTEIHGG (147 aa). Residue Cys-95 is the Glycyl thioester intermediate of the active site. The disordered stretch occupies residues 156–222; sequence GGAGGPSGRA…TDKKRALRRL (67 aa). At Ser-173 the chain carries Phosphoserine. The span at 208 to 222 shows a compositional bias: basic residues; that stretch reads AAKKKTDKKRALRRL.

Belongs to the ubiquitin-conjugating enzyme family. As to quaternary structure, component of the APC/C complex, composed of at least 14 distinct subunits that assemble into a complex of at least 19 chains with a combined molecular mass of around 1.2 MDa. Within this complex, directly interacts with ANAPC2 and ANAPC4. Interacts with CDC20, FZR1/CDH1 and VHL. Post-translationally, autoubiquitinated by the APC/C complex during G1, leading to its degradation by the proteasome.

It carries out the reaction S-ubiquitinyl-[E1 ubiquitin-activating enzyme]-L-cysteine + [E2 ubiquitin-conjugating enzyme]-L-cysteine = [E1 ubiquitin-activating enzyme]-L-cysteine + S-ubiquitinyl-[E2 ubiquitin-conjugating enzyme]-L-cysteine.. Its pathway is protein modification; protein ubiquitination. Functionally, accepts ubiquitin from the E1 complex and catalyzes its covalent attachment to other proteins. Catalyzes 'Lys-11'-linked polyubiquitination. Acts as an essential factor of the anaphase promoting complex/cyclosome (APC/C), a cell cycle-regulated ubiquitin ligase that controls progression through mitosis. Acts by specifically elongating 'Lys-11'-linked polyubiquitin chains initiated by the E2 enzyme UBE2C/UBCH10 on APC/C substrates, enhancing the degradation of APC/C substrates by the proteasome and promoting mitotic exit. Also acts by elongating ubiquitin chains initiated by the E2 enzyme UBE2D1/UBCH5 in vitro; it is however unclear whether UBE2D1/UBCH5 acts as an E2 enzyme for the APC/C in vivo. Also involved in ubiquitination and subsequent degradation of VHL, resulting in an accumulation of HIF1A. In vitro able to promote polyubiquitination using all 7 ubiquitin Lys residues, except 'Lys-48'-linked polyubiquitination. This is Ubiquitin-conjugating enzyme E2 S (UBE2S) from Homo sapiens (Human).